Consider the following 323-residue polypeptide: tRNA U34 carboxymethyltransferase (323 aa).

Residues Lys-91, Trp-105, Lys-110, Gly-130, 152–154, 181–182, Met-196, Tyr-200, and Arg-315 contribute to the carboxy-S-adenosyl-L-methionine site; these read DPT and IE.

The protein belongs to the class I-like SAM-binding methyltransferase superfamily. CmoB family. In terms of assembly, homotetramer.

It carries out the reaction carboxy-S-adenosyl-L-methionine + 5-hydroxyuridine(34) in tRNA = 5-carboxymethoxyuridine(34) in tRNA + S-adenosyl-L-homocysteine + H(+). Catalyzes carboxymethyl transfer from carboxy-S-adenosyl-L-methionine (Cx-SAM) to 5-hydroxyuridine (ho5U) to form 5-carboxymethoxyuridine (cmo5U) at position 34 in tRNAs. This Salmonella typhimurium (strain LT2 / SGSC1412 / ATCC 700720) protein is tRNA U34 carboxymethyltransferase.